The primary structure comprises 74 residues: Brevinin-2MT1 (74 aa).

Positions 1–22 are cleaved as a signal peptide; sequence MFTMKKSLLVLFFLGTISLSLC. A propeptide spans 23–39 (removed in mature form); sequence EEERNADEDDGEMTEEE. Cys-68 and Cys-74 form a disulfide bridge.

The protein belongs to the frog skin active peptide (FSAP) family. Brevinin subfamily. Expressed by the skin glands.

Its subcellular location is the secreted. In terms of biological role, antimicrobial peptide. Active against a variety of Gram-negative and Gram-positive bacterial strains. Active against fungi. Shows hemolytic activity against human erythrocytes. This chain is Brevinin-2MT1, found in Amolops mantzorum (Sichuan torrent frog).